The sequence spans 374 residues: DNA replication and repair protein RecF (374 aa).

Residue G30–T37 participates in ATP binding.

It belongs to the RecF family.

The protein resides in the cytoplasm. The RecF protein is involved in DNA metabolism; it is required for DNA replication and normal SOS inducibility. RecF binds preferentially to single-stranded, linear DNA. It also seems to bind ATP. In Lactobacillus johnsonii (strain CNCM I-12250 / La1 / NCC 533), this protein is DNA replication and repair protein RecF.